Consider the following 260-residue polypeptide: Metallo-beta-lactamase domain-containing protein 1 (260 aa).

Positions 118, 120, 122, 123, 173, 196, and 235 each coordinate Zn(2+).

The protein belongs to the metallo-beta-lactamase superfamily. Glyoxalase II family. As to quaternary structure, homodimer. It depends on Zn(2+) as a cofactor.

It localises to the cytoplasm. It is found in the cytosol. The protein localises to the nucleus. It catalyses the reaction a ribonucleotidyl-ribonucleotide-RNA + H2O = a 3'-end ribonucleotide-RNA + a 5'-end 5'-phospho-ribonucleoside-RNA + H(+). Endoribonuclease that catalyzes the hydrolysis of histone-coding pre-mRNA 3'-end. Involved in histone pre-mRNA processing during the S-phase of the cell cycle, which is required for entering/progressing through S-phase. Cleaves histone pre-mRNA at a major and a minor cleavage site after the 5'-ACCCA-3' and the 5'-ACCCACA-3' sequence, respectively, and located downstream of the stem-loop. May require the presence of the HDE element located at the histone pre-RNA 3'-end to avoid non-specific cleavage. The sequence is that of Metallo-beta-lactamase domain-containing protein 1 from Mus musculus (Mouse).